A 411-amino-acid chain; its full sequence is Flagellum-associated coiled-coil domain-containing protein 1 (411 aa).

The disordered stretch occupies residues 52-77 (SQPAKSTAFPRDKAQSRKLEESNKAP). Residues 61-74 (PRDKAQSRKLEESN) are compositionally biased toward basic and acidic residues. Coiled-coil stretches lie at residues 124-220 (SDII…LKNM) and 278-328 (NESF…VVLE). N6-acetyllysine is present on Lys-353. Residues 355–385 (FQTKLAEAEEKYKSTIQVLTEENNSLRQKVL) are a coiled coil.

It is found in the cytoplasm. The protein localises to the cytoplasmic granule. Its subcellular location is the cell projection. It localises to the cilium. The protein resides in the flagellum. In Rattus norvegicus (Rat), this protein is Flagellum-associated coiled-coil domain-containing protein 1.